The primary structure comprises 229 residues: Imidazoleglycerol-phosphate dehydratase (229 aa).

This sequence belongs to the imidazoleglycerol-phosphate dehydratase family.

The enzyme catalyses D-erythro-1-(imidazol-4-yl)glycerol 3-phosphate = 3-(imidazol-4-yl)-2-oxopropyl phosphate + H2O. Its pathway is amino-acid biosynthesis; L-histidine biosynthesis; L-histidine from 5-phospho-alpha-D-ribose 1-diphosphate: step 6/9. In Neurospora crassa (strain ATCC 24698 / 74-OR23-1A / CBS 708.71 / DSM 1257 / FGSC 987), this protein is Imidazoleglycerol-phosphate dehydratase.